Here is a 33-residue protein sequence, read N- to C-terminus: Mu-theraphotoxin-Osp1b (33 aa).

3 disulfides stabilise this stretch: cysteine 2–cysteine 17, cysteine 9–cysteine 22, and cysteine 16–cysteine 29.

This sequence belongs to the neurotoxin 10 (Hwtx-1) family. 22 (Htx-4) subfamily. Expressed by the venom gland.

The protein resides in the secreted. Functionally, voltage-gated sodium channel Nav1.7/SCN9A inhibitor. The chain is Mu-theraphotoxin-Osp1b from Orphnaecus sp. (strain Maanghit-Cave/Philippines) (Tarantula spider).